A 311-amino-acid chain; its full sequence is Mediator of RNA polymerase II transcription subunit 27-A (311 aa).

The protein belongs to the Mediator complex subunit 27 family. In terms of assembly, component of the Mediator complex.

It localises to the nucleus. In terms of biological role, component of the Mediator complex, a coactivator involved in the regulated transcription of nearly all RNA polymerase II-dependent genes. Mediator functions as a bridge to convey information from gene-specific regulatory proteins to the basal RNA polymerase II transcription machinery. Mediator is recruited to promoters by direct interactions with regulatory proteins and serves as a scaffold for the assembly of a functional preinitiation complex with RNA polymerase II and the general transcription factors. The polypeptide is Mediator of RNA polymerase II transcription subunit 27-A (med27-a) (Xenopus laevis (African clawed frog)).